Reading from the N-terminus, the 37-residue chain is Cytochrome b6-f complex subunit 5 (37 aa).

Residues 5-25 (LLSGIVLGLVPVTIAGLFVTA) form a helical membrane-spanning segment.

It belongs to the PetG family. As to quaternary structure, the 4 large subunits of the cytochrome b6-f complex are cytochrome b6, subunit IV (17 kDa polypeptide, PetD), cytochrome f and the Rieske protein, while the 4 small subunits are PetG, PetL, PetM and PetN. The complex functions as a dimer.

It is found in the plastid. It localises to the chloroplast thylakoid membrane. Component of the cytochrome b6-f complex, which mediates electron transfer between photosystem II (PSII) and photosystem I (PSI), cyclic electron flow around PSI, and state transitions. PetG is required for either the stability or assembly of the cytochrome b6-f complex. This Chlamydomonas moewusii (Chlamydomonas eugametos) protein is Cytochrome b6-f complex subunit 5.